A 193-amino-acid chain; its full sequence is Ion-translocating oxidoreductase complex subunit A (193 aa).

6 helical membrane-spanning segments follow: residues 5 to 25 (LLLFVGTVLVNNFVLVKFLGL), 47 to 67 (FVMTLASICAWLIDTWILIPL), 72 to 92 (LRTMAFILVIAVVVQFTEMVV), 102 to 122 (LLGIFLPLITTNCAVLGVALL), 134 to 154 (ALYGFSAAVGFSLVMVLFAAI), and 171 to 191 (AIALITAGLMSLAFMGFSGLV).

The protein belongs to the NqrDE/RnfAE family. The complex is composed of six subunits: RsxA, RsxB, RsxC, RsxD, RsxE and RsxG.

It is found in the cell inner membrane. In terms of biological role, part of a membrane-bound complex that couples electron transfer with translocation of ions across the membrane. Required to maintain the reduced state of SoxR. The chain is Ion-translocating oxidoreductase complex subunit A from Escherichia coli O45:K1 (strain S88 / ExPEC).